Consider the following 566-residue polypeptide: Probable cytochrome P450 519D1 (566 aa).

A helical transmembrane segment spans residues 1-21; the sequence is MNVFVLTFFICIIYLLFDLIK. Positions 471–491 are disordered; it reads FNNNNNNNNNNNNNNSNNKHK. A compositionally biased stretch (low complexity) spans 472 to 487; it reads NNNNNNNNNNNNNNSN. Cys510 is a binding site for heme.

The protein belongs to the cytochrome P450 family. Heme serves as cofactor.

The protein localises to the membrane. This is Probable cytochrome P450 519D1 (cyp519D1) from Dictyostelium discoideum (Social amoeba).